The primary structure comprises 157 residues: MIILGIDPALGSLGWAVVAKETAQLKYLASGIIRTNSKDAIHHRLAFINSTLEKVILEYQPNMVAIEETFVNTNSVTSLKLGYARGAIMSLIGRYNLDMREFKPNTVKKTVTGYGHAEKDQMLHMIKLLLSGTALITNSDEADAVAIAYTCLVTKNY.

Active-site residues include Asp-7, Glu-67, and Asp-140. Residues Asp-7, Glu-67, and Asp-140 each contribute to the Mg(2+) site.

It belongs to the RuvC family. Homodimer which binds Holliday junction (HJ) DNA. The HJ becomes 2-fold symmetrical on binding to RuvC with unstacked arms; it has a different conformation from HJ DNA in complex with RuvA. In the full resolvosome a probable DNA-RuvA(4)-RuvB(12)-RuvC(2) complex forms which resolves the HJ. Mg(2+) serves as cofactor.

The protein resides in the cytoplasm. It catalyses the reaction Endonucleolytic cleavage at a junction such as a reciprocal single-stranded crossover between two homologous DNA duplexes (Holliday junction).. Functionally, the RuvA-RuvB-RuvC complex processes Holliday junction (HJ) DNA during genetic recombination and DNA repair. Endonuclease that resolves HJ intermediates. Cleaves cruciform DNA by making single-stranded nicks across the HJ at symmetrical positions within the homologous arms, yielding a 5'-phosphate and a 3'-hydroxyl group; requires a central core of homology in the junction. The consensus cleavage sequence is 5'-(A/T)TT(C/G)-3'. Cleavage occurs on the 3'-side of the TT dinucleotide at the point of strand exchange. HJ branch migration catalyzed by RuvA-RuvB allows RuvC to scan DNA until it finds its consensus sequence, where it cleaves and resolves the cruciform DNA. The chain is Crossover junction endodeoxyribonuclease RuvC from Rickettsia conorii (strain ATCC VR-613 / Malish 7).